The primary structure comprises 362 residues: Putative membrane-bound acyltransferase YfiQ (362 aa).

A run of 10 helical transmembrane segments spans residues 11 to 31 (CISCLSVVLLHIISMVLMLQA), 44 to 64 (FRTLLMFSTPAFIFISEFLLA), 82 to 102 (VIFVPFLFIAAIDALLMTSAM), 119 to 139 (VFLGNFIGYFILVIFQFYMLH), 153 to 173 (WVLSISFVVTAAYLGYFSAAS), 181 to 201 (GGAFPFFWVPFAGWLFYFCLA), 220 to 240 (WVVYGAAIASGALVVTVSYVG), 252 to 267 (IMLYSTSMIFLCFHLF), 283 to 303 (YSFSIYLLHAYFMIIGYVLLL), and 308 to 328 (IPAVPAVLLLFAVCTAGPIMT).

The protein belongs to the acyltransferase 3 family.

The protein localises to the cell membrane. The chain is Putative membrane-bound acyltransferase YfiQ (yfiQ) from Bacillus subtilis (strain 168).